A 159-amino-acid chain; its full sequence is Small ribosomal subunit protein uS19 (159 aa).

It belongs to the universal ribosomal protein uS19 family.

Its function is as follows. Protein S19 forms a complex with S13 that binds strongly to the 16S ribosomal RNA. This Pyrobaculum arsenaticum (strain DSM 13514 / JCM 11321 / PZ6) protein is Small ribosomal subunit protein uS19.